The primary structure comprises 419 residues: Peptide chain release factor subunit 1 (419 aa).

It belongs to the eukaryotic release factor 1 family. As to quaternary structure, heterodimer of two subunits, one of which binds GTP.

The protein localises to the cytoplasm. Directs the termination of nascent peptide synthesis (translation) in response to the termination codons UAA, UAG and UGA. The protein is Peptide chain release factor subunit 1 of Methanococcus maripaludis (strain DSM 14266 / JCM 13030 / NBRC 101832 / S2 / LL).